The sequence spans 206 residues: Putative archaetidylserine decarboxylase proenzyme (206 aa).

S172 acts as the Schiff-base intermediate with substrate; via pyruvic acid in catalysis. S172 carries the post-translational modification Pyruvic acid (Ser); by autocatalysis.

This sequence belongs to the phosphatidylserine decarboxylase family. PSD-A subfamily. In terms of assembly, heterodimer of a large membrane-associated beta subunit and a small pyruvoyl-containing alpha subunit. The cofactor is pyruvate. Post-translationally, is synthesized initially as an inactive proenzyme. Formation of the active enzyme involves a self-maturation process in which the active site pyruvoyl group is generated from an internal serine residue via an autocatalytic post-translational modification. Two non-identical subunits are generated from the proenzyme in this reaction, and the pyruvate is formed at the N-terminus of the alpha chain, which is derived from the carboxyl end of the proenzyme. The post-translation cleavage follows an unusual pathway, termed non-hydrolytic serinolysis, in which the side chain hydroxyl group of the serine supplies its oxygen atom to form the C-terminus of the beta chain, while the remainder of the serine residue undergoes an oxidative deamination to produce ammonia and the pyruvoyl prosthetic group on the alpha chain.

It localises to the cell membrane. The enzyme catalyses archaetidylserine + H(+) = archaetidylethanolamine + CO2. Functionally, catalyzes the formation of archaetidylethanolamine (PtdEtn) from archaetidylserine (PtdSer). This is Putative archaetidylserine decarboxylase proenzyme from Methanocaldococcus jannaschii (strain ATCC 43067 / DSM 2661 / JAL-1 / JCM 10045 / NBRC 100440) (Methanococcus jannaschii).